A 258-amino-acid polypeptide reads, in one-letter code: Type II restriction enzyme HindII (258 aa).

The catalysed reaction is Endonucleolytic cleavage of DNA to give specific double-stranded fragments with terminal 5'-phosphates.. Functionally, a P subtype restriction enzyme that recognizes the double-stranded sequence 5'-GTYRAC-3' and cleaves after Y-3. The chain is Type II restriction enzyme HindII (hindIIR) from Haemophilus influenzae (strain ATCC 51907 / DSM 11121 / KW20 / Rd).